We begin with the raw amino-acid sequence, 418 residues long: Equilibrative nucleotide transporter 3 (418 aa).

11 helical membrane-spanning segments follow: residues 20–40, 56–76, 86–106, 112–132, 142–162, 186–206, 264–284, 291–311, 326–346, 353–373, and 392–412; these read MVVCCILGIGSLVSWNSMLTI, VLTLVYQPFALGTILILAYHE, LIGYILFTISTFLLIVLDLAT, IGPYIGLCAVVASFGLADATV, LMCPELVQSFMGGLAVSGALT, MFLAISTCIELLCVFLYAYVF, YAVNLFLIYVCTLSIFPGFLY, GLGDWYALVLVAMYNCWDLVG, KLITIAVLSRYLLIPAFYFTA, WMIMLISVLGLTNGHLTVCIM, and LVIFLLGGIFAGVALDWLWLI.

The protein belongs to the SLC29A/ENT transporter (TC 2.A.57) family. As to expression, expressed in root tips, vasculature of roots and leaves, and meristems of leaf primordia. Expressed in flowers and siliques.

Its subcellular location is the cell membrane. Its function is as follows. Nucleoside transporter that functions as a pyrimidine nucleoside carrier in all organs. Has high affinity for adenosine and uridine when expressed in a heterologous system (yeast). Mediates proton-dependent adenosine or uridine transport in Xenopus oocytes. This Arabidopsis thaliana (Mouse-ear cress) protein is Equilibrative nucleotide transporter 3.